The chain runs to 237 residues: CDP-diacylglycerol--inositol 3-phosphatidyltransferase (237 aa).

At 1-12 the chain is on the cytoplasmic side; the sequence is MGKNEQKDPNVY. Residues 13-33 form a helical membrane-spanning segment; it reads FFVPNLIGFTRVFLVLISLYF. Residues 34–41 are Lumenal-facing; it reads MSWHPNYC. Residues 42–62 form a helical membrane-spanning segment; it reads TIVYLYSSLLDAFDGWAARKL. Mg(2+) is bound by residues Asp-52 and Asp-55. A CDP-1,2-diacyl-sn-glycerol is bound by residues Gly-56, Arg-60, and Thr-66. Topologically, residues 63–71 are cytoplasmic; the sequence is HQATNFGAI. A helical membrane pass occupies residues 72-92; it reads LDMVTDRCATSCLLCFLCAAY. Mg(2+)-binding residues include Asp-73 and Asp-77. Catalysis depends on Asp-77, which acts as the Proton acceptor. Over 93–94 the chain is Lumenal; that stretch reads PK. The chain crosses the membrane as a helical span at residues 95–115; the sequence is YAIIFQLLVSLDLASHYMHMY. The Cytoplasmic portion of the chain corresponds to 116–144; the sequence is STLHQGASSHKTVTKKHNWMLRLYYGNNK. The helical transmembrane segment at 145–165 threads the bilayer; it reads VLFIFCAANEMFFVALYLLSF. Over 166-185 the chain is Lumenal; sequence TPRTPPKLGYLPVPSFIYST. Residues 186–206 form a helical membrane-spanning segment; that stretch reads GELPLSYPTLLAVLCGPICLA. The Cytoplasmic segment spans residues 207–237; sequence KQIINVVQLVNAANALVKMDVEQRRAAKKLQ.

It belongs to the CDP-alcohol phosphatidyltransferase class-I family. Mn(2+) serves as cofactor. The cofactor is Mg(2+).

Its subcellular location is the microsome membrane. The protein localises to the endoplasmic reticulum membrane. The protein resides in the golgi apparatus membrane. It is found in the mitochondrion outer membrane. The enzyme catalyses a CDP-1,2-diacyl-sn-glycerol + myo-inositol = a 1,2-diacyl-sn-glycero-3-phospho-(1D-myo-inositol) + CMP + H(+). Its function is as follows. Catalyzes the synthesis of phosphatidylinositol (PtdIns). In Schizosaccharomyces pombe (strain 972 / ATCC 24843) (Fission yeast), this protein is CDP-diacylglycerol--inositol 3-phosphatidyltransferase (pis1).